The primary structure comprises 330 residues: D-alanine--D-alanine ligase (330 aa).

Residues 122-323 (NRFLSGFGIR…MKEVLCTIIR (202 aa)) form the ATP-grasp domain. Residue 151–206 (TARMGLPLFVKPNVGGSSIATTKVVEAAQLLPAIGQAFSEGEEVMIERLICGTEVT) participates in ATP binding. Mg(2+) is bound by residues D277, E290, and N292.

It belongs to the D-alanine--D-alanine ligase family. Requires Mg(2+) as cofactor. The cofactor is Mn(2+).

Its subcellular location is the cytoplasm. The catalysed reaction is 2 D-alanine + ATP = D-alanyl-D-alanine + ADP + phosphate + H(+). It functions in the pathway cell wall biogenesis; peptidoglycan biosynthesis. Its function is as follows. Cell wall formation. This chain is D-alanine--D-alanine ligase, found in Porphyromonas gingivalis (strain ATCC 33277 / DSM 20709 / CIP 103683 / JCM 12257 / NCTC 11834 / 2561).